The primary structure comprises 142 residues: MFIGNYQHNIDPKGRLSIPSKLRSLIQDSVVLSRGLDGCLELRTNQEFENYANKFLSQSNNKQQNRNYKRLLFANSLTVEIDSANRILIPANFKKMANLSKEVVIIGMGDHIELWDINAYEQFNEANFDKFNELAESMDDDH.

SpoVT-AbrB domains lie at 5 to 47 (NYQH…TNQE) and 76 to 119 (SLTV…DINA).

It belongs to the MraZ family. In terms of assembly, forms oligomers.

Its subcellular location is the cytoplasm. It is found in the nucleoid. The polypeptide is Transcriptional regulator MraZ (Mycoplasmoides gallisepticum (strain R(low / passage 15 / clone 2)) (Mycoplasma gallisepticum)).